The primary structure comprises 119 residues: UPF0738 protein BAA_1286 (119 aa).

Belongs to the UPF0738 family.

The polypeptide is UPF0738 protein BAA_1286 (Bacillus anthracis (strain A0248)).